The chain runs to 72 residues: uncharacterized protein (72 aa).

The chain crosses the membrane as a helical span at residues 41–58 (FSFLVHIMCGLTLTSYVI).

Its subcellular location is the membrane. This is an uncharacterized protein from Dictyostelium discoideum (Social amoeba).